The following is a 450-amino-acid chain: 3-phosphoshikimate 1-carboxyvinyltransferase (450 aa).

K23, S24, and R28 together coordinate 3-phosphoshikimate. K23 provides a ligand contact to phosphoenolpyruvate. Phosphoenolpyruvate contacts are provided by G96 and R124. 3-phosphoshikimate-binding residues include S167, S168, Q169, S196, E311, and H340. A phosphoenolpyruvate-binding site is contributed by Q169. The active-site Proton acceptor is E311. Residues R344, R385, and K410 each contribute to the phosphoenolpyruvate site. The interval 426–450 (GQGWGYPQPRSGQRARRATGQGSGG) is disordered.

Belongs to the EPSP synthase family. Monomer.

The protein resides in the cytoplasm. It catalyses the reaction 3-phosphoshikimate + phosphoenolpyruvate = 5-O-(1-carboxyvinyl)-3-phosphoshikimate + phosphate. Its pathway is metabolic intermediate biosynthesis; chorismate biosynthesis; chorismate from D-erythrose 4-phosphate and phosphoenolpyruvate: step 6/7. In terms of biological role, catalyzes the transfer of the enolpyruvyl moiety of phosphoenolpyruvate (PEP) to the 5-hydroxyl of shikimate-3-phosphate (S3P) to produce enolpyruvyl shikimate-3-phosphate and inorganic phosphate. This Mycobacterium bovis (strain ATCC BAA-935 / AF2122/97) protein is 3-phosphoshikimate 1-carboxyvinyltransferase.